The chain runs to 305 residues: Leucine-rich repeat-containing protein 25 (305 aa).

Positions 1-20 (MGGTLAWTLLLPLLLRESDS) are cleaved as a signal peptide. At 21-165 (LEPSCTVSSA…SCAPGLASAT (145 aa)) the chain is on the extracellular side. 3 LRR repeats span residues 39–59 (SATC…QSLR), 62–83 (NVIL…FFAH), and 86–107 (KLEV…LAAR). Residues N44 and N55 are each glycosylated (N-linked (GlcNAc...) asparagine). N130 and N148 each carry an N-linked (GlcNAc...) asparagine glycan. A helical transmembrane segment spans residues 166–186 (IGAVVVSGCLLLGLAIAGPVL). Residues 187 to 305 (AWRLWRCRVA…DEEEYVIPGH (119 aa)) lie on the Cytoplasmic side of the membrane. Positions 204-229 (PWAAQDGPKPGLGLQPRYGSRSAPKP) are disordered. Y284 is modified (phosphotyrosine).

In terms of assembly, interacts with RIGI. Interacts with SQSTM1. Interacts with p65/RELA; this interaction promotes the degradation of RELA through autophagy. In terms of tissue distribution, expressed in plasmacytoid dendritic cells (PDC), monocyte-derived dendritic cells (MDDC), granulocytes, monocytes, B-lymphocytes, peripheral blood leukocytes, spleen, bone marrow, and, to a lesser extent, lymph nodes, fetal liver, and appendix but not in thymus.

It localises to the membrane. Its subcellular location is the cytoplasm. Functionally, plays a role in the inhibition of RLR-mediated type I interferon signaling pathway by targeting RIGI for autophagic degradation. Interacts specifically with ISG15-associated RIGI to promote interaction between RIGI and the autophagic cargo receptor p62/SQSTM1 to mediate RIGI degradation via selective autophagy. Also plays a role in the inhibition of NF-kappa-B signaling pathway and inflammatory response by promoting the degradation of p65/RELA. The sequence is that of Leucine-rich repeat-containing protein 25 (LRRC25) from Homo sapiens (Human).